Consider the following 288-residue polypeptide: Probable pectinesterase 56 (288 aa).

The first 27 residues, 1-27 (MAMTSTMQLLVLSFLVIASLFLGATVA), serve as a signal peptide directing secretion. Asn-55 and Asn-95 each carry an N-linked (GlcNAc...) asparagine glycan. Substrate is bound by residues Thr-120 and Gln-150. The active-site Proton donor is the Asp-173. Catalysis depends on Asp-194, which acts as the Nucleophile. Asn-242 carries an N-linked (GlcNAc...) asparagine glycan. Substrate contacts are provided by Arg-262 and Trp-264.

Belongs to the pectinesterase family.

It is found in the secreted. Its subcellular location is the cell wall. It carries out the reaction [(1-&gt;4)-alpha-D-galacturonosyl methyl ester](n) + n H2O = [(1-&gt;4)-alpha-D-galacturonosyl](n) + n methanol + n H(+). It participates in glycan metabolism; pectin degradation; 2-dehydro-3-deoxy-D-gluconate from pectin: step 1/5. Functionally, acts in the modification of cell walls via demethylesterification of cell wall pectin. This Arabidopsis thaliana (Mouse-ear cress) protein is Probable pectinesterase 56 (PME56).